A 335-amino-acid chain; its full sequence is tRNA (guanine(6)-N2)-methyltransferase (335 aa).

One can recognise a THUMP domain in the interval 47 to 150 (EALGLRLAHH…GEEAFLGVQL (104 aa)). Residues 195-197 (SGT), 243-244 (DA), and Asn-260 each bind S-adenosyl-L-methionine.

The protein belongs to the methyltransferase superfamily. As to quaternary structure, monomer in solution.

It is found in the cytoplasm. The enzyme catalyses guanosine(6) in tRNA + S-adenosyl-L-methionine = N(2)-methylguanosine(6) in tRNA + S-adenosyl-L-homocysteine + H(+). Functionally, S-adenosyl-L-methionine-dependent methyltransferase that catalyzes the methylation of the guanosine nucleotide at position 6 (m2G6) in tRNA(Phe). The protein is tRNA (guanine(6)-N2)-methyltransferase of Thermus thermophilus (strain ATCC BAA-163 / DSM 7039 / HB27).